The sequence spans 486 residues: CREB-regulated transcription coactivator 1 homolog (486 aa).

The tract at residues Met1 to Leu62 is disordered. Residues Lys9 to Glu23 are compositionally biased toward basic and acidic residues. The span at Gln34–Thr52 shows a compositional bias: polar residues. Phosphoserine; by AMPK is present on Ser76. The tract at residues Pro103–Val166 is disordered. Residues Arg144–Asn160 are compositionally biased toward pro residues. Ser179 is modified (phosphoserine; by AMPK). 3 disordered regions span residues Ser214–Asn278, Phe327–Pro417, and Ala460–Asn486. Composition is skewed to polar residues over residues Pro224 to Pro245, Pro387 to Pro402, and Pro461 to Phe475.

The protein belongs to the TORC family. As to quaternary structure, interacts with crh-1. Post-translationally, phosphorylated by AMPK at Ser-76 and Ser-179. Dephosphorylated by tax-6, the catalytic subunit of calcineurin. As to expression, expressed throughout the intestine and in head and tail neurons. Expressed in octopaminergic RIC neurons.

The protein resides in the nucleus. It localises to the cytoplasm. It is found in the cytosol. Functionally, transcriptional coactivator for crh-1, the homolog of vertebrate transcription factor CREB1. Regulates the transcription of metabolic genes and may have a role in mitochondrial dynamics and metabolism. Involved in modulation of lifespan. Through crh-1, counteracts the pro-lifespan-extension signals of AMPK both cell autonomously and, when expressed in neurons, at a systemic level, possibly using the catecholamine analog, octopamine, as a messenger. This is CREB-regulated transcription coactivator 1 homolog from Caenorhabditis elegans.